The chain runs to 291 residues: Probable protein S-acyltransferase 12 (291 aa).

Helical transmembrane passes span 14-34 (GYFM…AVVV) and 49-69 (LSAL…MLLW). One can recognise a DHHC domain in the interval 111–161 (GYCTKCRNVKPPRCHHCSVCQRCVLKMDHHCVWIVNCVGARNYKFFLLFLF). Cys141 (S-palmitoyl cysteine intermediate) is an active-site residue. 2 consecutive transmembrane segments (helical) span residues 155 to 175 (FFLL…IVLL) and 198 to 218 (LVLA…FVVM).

It belongs to the DHHC palmitoyltransferase family.

It is found in the cell membrane. It catalyses the reaction L-cysteinyl-[protein] + hexadecanoyl-CoA = S-hexadecanoyl-L-cysteinyl-[protein] + CoA. Its function is as follows. Palmitoyl acyltransferase. The sequence is that of Probable protein S-acyltransferase 12 (PAT12) from Arabidopsis thaliana (Mouse-ear cress).